A 191-amino-acid chain; its full sequence is Calcium and integrin-binding protein 1 (191 aa).

Glycine 2 is lipidated: N-myristoyl glycine. 2 EF-hand domains span residues 103–138 (TPDIKSHYAFRIFDFDDDGTLNREDLSRLVNCLTGE) and 148–183 (EMKQLIDNILEESDIDRDGTINLSEFQHVISRSPDF). The Ca(2+) site is built by aspartate 116, aspartate 118, aspartate 120, threonine 122, aspartate 127, aspartate 161, aspartate 163, aspartate 165, threonine 167, and glutamate 172. Aspartate 118 is subject to Phosphoserine.

As to quaternary structure, monomer. Interacts with MYO1C. Interacts (via C-terminal region) with PPP3R1 and CACNA1C; the interactions increase upon cardiomyocytes hypertrophy. Interacts with the heterodimeric integrin alpha-IIb/beta3 (ITGA2B-ITGB3). Interacts with ITGA2B (via cytoplasmic domain); the interaction is direct and calcium-dependent. Interacts with the protein kinases PLK2/SNK and PRKDC (via the region immediately upstream of the kinase domain). Interacts with PLK3; the interaction inhibits PLK3 kinase activity. Interacts with PSEN2. Interacts (via C-terminus) with F8. Interacts with NBR1 (via C-terminus). Interacts with FEZ1 (via C-terminus). Interacts with UBR5 (via C-terminus); the interaction is sensitive to DNA damage, and may target CIB1 for ubiquitin-mediated degradation. Interacts with IFI6; the interaction is direct. Interacts with BCL2. Interacts with ITPR3; the interaction occurs in a calcium-dependent manner. Interacts with PTK2/FAK1. Interacts with MAP3K5; the interaction inhibits MAP3K5 activation by phosphorylation, and its subsequent interaction with TRAF2. Isoform 2 interacts with PRKD2 (via N-terminal AP-rich region), PTK2/FAK1 and PAK1. Interacts with TAS1R2 (via C-terminus); the interaction is independent of the myristoylation state of CIB1. Interacts (via C-terminal region) with STMN2 (via the N-terminal region); the interaction is direct, occurs in a calcium-dependent manner and attenuates the STMN2-induced neurite outgrowth inhibition. Interacts with SPHK1, the interaction occurs in a calcium-dependent manner. Interacts with ITGA2B (via C-terminal cytoplasmic tail); the interaction occurs upon platelet aggregation and is stabilized/increased in a calcium and magnesium-dependent manner. Interacts with PAK1 (via N-terminal region); the interaction is direct and occurs in a calcium-dependent manner. Interacts with RAC3 (via C-terminal region); the interaction induces their association with the cytoskeleton upon alpha-IIb/beta3 integrin-mediated adhesion. Interacts with ITGA5 and ITGAV. Interacts and forms a complex with TMC6 and TMC8; the interaction stabilizes each component of the complex. In terms of assembly, (Microbial infection) Interacts with human papillomavirus 4/HPV4 protein E8, human papillomavirus 5/HPV5 protein E1, and human papillomavirus 16/HPV16 proteins E2 and E5. Phosphorylation of isoform 2 at Ser-118 by PRKD2 increases its ability to stimulate tumor angiogenesis. Ubiquitously expressed. Expressed in the epidermis, hair follicles and keratinocytes. Detected in platelets and in cell lines of megakaryocytic and erythrocytic lineages. Both isoform 1 and isoform 2 are detected in various cancer cell lines, with isoform 2 being the predominant form (at protein level).

It is found in the membrane. Its subcellular location is the cell membrane. It localises to the sarcolemma. The protein resides in the apical cell membrane. The protein localises to the cell projection. It is found in the ruffle membrane. Its subcellular location is the filopodium tip. It localises to the growth cone. The protein resides in the lamellipodium. The protein localises to the cytoplasm. It is found in the cytoskeleton. Its subcellular location is the microtubule organizing center. It localises to the centrosome. The protein resides in the perinuclear region. The protein localises to the nucleus. It is found in the neuron projection. Its subcellular location is the perikaryon. It localises to the golgi apparatus. The protein resides in the trans-Golgi network. Functionally, calcium-binding protein that plays a role in the regulation of numerous cellular processes, such as cell differentiation, cell division, cell proliferation, cell migration, thrombosis, angiogenesis, cardiac hypertrophy and apoptosis. Involved in bone marrow megakaryocyte differentiation by negatively regulating thrombopoietin-mediated signaling pathway. Participates in the endomitotic cell cycle of megakaryocyte, a form of mitosis in which both karyokinesis and cytokinesis are interrupted. Plays a role in integrin signaling by negatively regulating alpha-IIb/beta3 activation in thrombin-stimulated megakaryocytes preventing platelet aggregation. Up-regulates PTK2/FAK1 activity, and is also needed for the recruitment of PTK2/FAK1 to focal adhesions; it thus appears to play an important role in focal adhesion formation. Positively regulates cell migration on fibronectin in a CDC42-dependent manner, the effect being negatively regulated by PAK1. Functions as a negative regulator of stress activated MAP kinase (MAPK) signaling pathways. Down-regulates inositol 1,4,5-trisphosphate receptor-dependent calcium signaling. Involved in sphingosine kinase SPHK1 translocation to the plasma membrane in a N-myristoylation-dependent manner preventing TNF-alpha-induced apoptosis. Regulates serine/threonine-protein kinase PLK3 activity for proper completion of cell division progression. Plays a role in microtubule (MT) dynamics during neuronal development; disrupts the MT depolymerization activity of STMN2 attenuating NGF-induced neurite outgrowth and the MT reorganization at the edge of lamellipodia. Promotes cardiomyocyte hypertrophy via activation of the calcineurin/NFAT signaling pathway. Stimulates calcineurin PPP3R1 activity by mediating its anchoring to the sarcolemma. In ischemia-induced (pathological or adaptive) angiogenesis, stimulates endothelial cell proliferation, migration and microvessel formation by activating the PAK1 and ERK1/ERK2 signaling pathway. Also promotes cancer cell survival and proliferation. May regulate cell cycle and differentiation of spermatogenic germ cells, and/or differentiation of supporting Sertoli cells. Forms a complex with TMC6/EVER1 and TMC8/EVER2 in lymphocytes and keratynocytes where CIB1 stabilizes TMC6 and TMC8 levels and reciprocally. Acts as a restriction factor that promotes keratinocyte-intrinsic immunity to human beta-papillomaviruses (HPVs). In terms of biological role, plays a regulatory role in angiogenesis and tumor growth by mediating PKD/PRKD2-induced vascular endothelial growth factor A (VEGFA) secretion. The polypeptide is Calcium and integrin-binding protein 1 (CIB1) (Homo sapiens (Human)).